The following is a 961-amino-acid chain: Vitamin B12-dependent ribonucleotide reductase (961 aa).

The interval 1–23 (MTETTSGPARGSRTKGTKATKGL) is disordered. Residues S143, 159 to 160 (AC), G188, 364 to 368 (NPCSE), and 554 to 558 (PTGTI) contribute to the substrate site. C160 and C377 are joined by a disulfide. N364 serves as the catalytic Proton acceptor. The Cysteine radical intermediate role is filled by C366. The active-site Proton acceptor is the E368.

The protein belongs to the ribonucleoside diphosphate reductase class-2 family. Homotetramer. The cofactor is adenosylcob(III)alamin.

The catalysed reaction is a 2'-deoxyribonucleoside 5'-diphosphate + [thioredoxin]-disulfide + H2O = a ribonucleoside 5'-diphosphate + [thioredoxin]-dithiol. In terms of biological role, catalyzes the reduction of ribonucleotides to deoxyribonucleotides. May function to provide a pool of deoxyribonucleotide precursors for DNA repair during oxygen limitation and/or for immediate growth after restoration of oxygen. The protein is Vitamin B12-dependent ribonucleotide reductase (nrdJ) of Streptomyces clavuligerus.